The primary structure comprises 112 residues: Large ribosomal subunit protein P2 (112 aa).

Positions 81 to 112 are disordered; that stretch reads VETAEAKKEDKKEEKKEEEEEEEDDLGFSLFG. The span at 84 to 95 shows a compositional bias: basic and acidic residues; that stretch reads AEAKKEDKKEEK. Over residues 96–106 the composition is skewed to acidic residues; that stretch reads KEEEEEEEDDL.

Belongs to the eukaryotic ribosomal protein P1/P2 family. In terms of assembly, P1 and P2 exist as dimers at the large ribosomal subunit. Phosphorylated.

In terms of biological role, plays an important role in the elongation step of protein synthesis. The polypeptide is Large ribosomal subunit protein P2 (MAL3P3.19) (Plasmodium falciparum (isolate 3D7)).